The sequence spans 650 residues: uncharacterized protein (650 aa).

This is an uncharacterized protein from Caenorhabditis elegans.